The sequence spans 979 residues: MKSLKAKFRKSDTNEWNKNDDRLLQAVENGDAEKVASLLGKKGASATKHDSEGKTAFHLAAAKGHVECLKVMVTHGVDVTAQDSSGHSALHVAAKNGHPECIRKLLQYKSPAENIDNSGKTALHYAAAQGCLQAVQLLCEHKSPINLKDLDGNIPLLVAVQNGHSEACHFLLDHGADVNSRDKNGRTALMLACETGSSNTVDALIKKGADLSLVDSLGHNALHYSKLSENAGIQNLLLSKISQDADLKTPTKPKQHDQVSKISSERSGTPKKRKAPPPPISPTQLSDVSSPRSITSTPLSGKESVFFAEAPFKAEISSIQENKDRLSDSTAGADSLLDISSEADQQDLLVLLQAKVASLTLHNKELQDKLQAKSPKDKEAEADLSFQSFHSTQTDLAPSPGKASDIPSSDAKSSPPVEHPAGTSTTDNDVIIRQLQDSLHDLQKRLESSEAEKKQLQDELQSQRTDTLCLNNTEISENGSDLSQKLKETQSKYEEAMKEVLSVQKQMKLGLLSQESADGYSHLREAPADEDIDTLKQDLQKAVEESARNKERVRELETKLAEKEQAEATKPPAEACEELRSSYCSVIENMNKEKAFLFEKYQQAQEEIMKLKDTLKSQMPQEAPDDSGDMKEAMNRMIDELNKQVSELSQLYREAQAELEDYRKRKSLEDAAEYIHKAEHERLMHVSNLSRAKSEEALSEMKSQYSKVLNELTQLKQLVDAHKENSVSITEHLQVITTLRTTAKEMEEKISALTGHLANKEAEVAKLEKQLAEEKAAVSDAMVPKSSYEKLQASLESEVNALATKLKESVREREKAHSEVAQVRSEVSQARREKDNIQTLLKAKEQEVTALVQKFQRAQEELAGMRRCSETSSKLEEDKDEKINEMTREVLKLKEALNSLSQLSYSTSSSKRQSQQLDLLQQQVKQLQNQLAECKKHHQEVISVYRMHLLYAVQGQMDEDVQKVLKQILTMCKNQSQKK.

M1 carries the N-acetylmethionine modification. At S11 the chain carries Phosphoserine. ANK repeat units follow at residues 18–51, 52–81, 85–114, 118–147, 151–180, 184–213, and 217–247; these read KNDD…KHDS, EGKT…DVTA, SGHS…PAEN, SGKT…PINL, DGNI…DVNS, NGRT…DLSL, and LGHN…DADL. Residues 247–259 show a composition bias toward basic and acidic residues; the sequence is LKTPTKPKQHDQV. The tract at residues 247 to 299 is disordered; sequence LKTPTKPKQHDQVSKISSERSGTPKKRKAPPPPISPTQLSDVSSPRSITSTPL. The residue at position 249 (T249) is a Phosphothreonine. The Nuclear localization signal signature appears at 270 to 276; sequence PKKRKAP. Residues S281, S286, and S293 each carry the phosphoserine modification. The segment covering 282–299 has biased composition (polar residues); it reads PTQLSDVSSPRSITSTPL. Phosphothreonine occurs at positions 295 and 297. Phosphoserine is present on residues S300, S304, S318, S327, S329, S340, S341, and S358. Residues 349–374 are a coiled coil; sequence LVLLQAKVASLTLHNKELQDKLQAKS. 2 disordered regions span residues 392–429 and 446–467; these read TQTD…TDND and LESS…RTDT. Residues 430 to 943 adopt a coiled-coil conformation; sequence VIIRQLQDSL…CKKHHQEVIS (514 aa). Over residues 446 to 457 the composition is skewed to basic and acidic residues; the sequence is LESSEAEKKQLQ. Residues 458 to 467 are compositionally biased toward polar residues; the sequence is DELQSQRTDT. Residues S513, S516, S667, S694, and S914 each carry the phosphoserine modification.

Interacts with PALLD. Associates with actin. However, does not bind F-actin directly. In terms of tissue distribution, highly expressed in testis, where it localizes to seminiferous tubules (at protein level). Expressed in ganglion cell layer and in Muller cell fibers of the retina (at protein level). In small intestine highly expressed at the apical and lateral borders of absorptive epithelia (at protein level). In liver highly expressed along the bile canaliculi (at protein level).

It localises to the cytoplasm. The protein localises to the cytoskeleton. The protein resides in the stress fiber. It is found in the cell cortex. Its subcellular location is the cell junction. It localises to the nucleus. Its function is as follows. Plays a role in actin regulation at the ectoplasmic specialization, a type of cell junction specific to testis. Important for establishment of sperm polarity and normal spermatid adhesion. May also promote integrity of Sertoli cell tight junctions at the blood-testis barrier. The sequence is that of Ankycorbin (Rai14) from Mus musculus (Mouse).